The sequence spans 257 residues: Thiazole synthase (257 aa).

Residue lysine 96 is the Schiff-base intermediate with DXP of the active site. Residues glycine 157, 184–185, and 206–207 contribute to the 1-deoxy-D-xylulose 5-phosphate site; these read AG and NT.

The protein belongs to the ThiG family. As to quaternary structure, homotetramer. Forms heterodimers with either ThiH or ThiS.

It is found in the cytoplasm. It carries out the reaction [ThiS sulfur-carrier protein]-C-terminal-Gly-aminoethanethioate + 2-iminoacetate + 1-deoxy-D-xylulose 5-phosphate = [ThiS sulfur-carrier protein]-C-terminal Gly-Gly + 2-[(2R,5Z)-2-carboxy-4-methylthiazol-5(2H)-ylidene]ethyl phosphate + 2 H2O + H(+). It functions in the pathway cofactor biosynthesis; thiamine diphosphate biosynthesis. Catalyzes the rearrangement of 1-deoxy-D-xylulose 5-phosphate (DXP) to produce the thiazole phosphate moiety of thiamine. Sulfur is provided by the thiocarboxylate moiety of the carrier protein ThiS. In vitro, sulfur can be provided by H(2)S. The protein is Thiazole synthase of Bartonella bacilliformis (strain ATCC 35685 / KC583 / Herrer 020/F12,63).